Reading from the N-terminus, the 454-residue chain is Probable 1,4-beta-D-glucan cellobiohydrolase C (454 aa).

An N-terminal signal peptide occupies residues 1-19 (MKHLASSIALTLLLPAVQA). A CBM1 domain is found at 20 to 55 (QQTVWGQCGGQGWSGPTSCVAGAACSTLNPYYAQCI). 2 disulfides stabilise this stretch: Cys-27-Cys-44 and Cys-38-Cys-54. Thr-rich linker stretches follow at residues 59–94 (TATS…PTVT) and 95–454 (ASGN…NPSF). Residues 68–95 (TTAATTTSQTTTKPTTTGPTTSAPTVTA) are disordered. The active site involves Asp-184. Disulfide bonds link Cys-185–Cys-244 and Cys-376–Cys-423. Asp-230 acts as the Proton donor in catalysis. Asp-409 acts as the Nucleophile in catalysis. Asn-413 carries an N-linked (GlcNAc...) asparagine glycan.

Belongs to the glycosyl hydrolase 6 (cellulase B) family.

Its subcellular location is the secreted. The catalysed reaction is Hydrolysis of (1-&gt;4)-beta-D-glucosidic linkages in cellulose and cellotetraose, releasing cellobiose from the non-reducing ends of the chains.. Functionally, the biological conversion of cellulose to glucose generally requires three types of hydrolytic enzymes: (1) Endoglucanases which cut internal beta-1,4-glucosidic bonds; (2) Exocellobiohydrolases that cut the disaccharide cellobiose from the non-reducing end of the cellulose polymer chain; (3) Beta-1,4-glucosidases which hydrolyze the cellobiose and other short cello-oligosaccharides to glucose. In Aspergillus fumigatus (strain CBS 144.89 / FGSC A1163 / CEA10) (Neosartorya fumigata), this protein is Probable 1,4-beta-D-glucan cellobiohydrolase C (cbhC).